The sequence spans 157 residues: 3-hydroxyacyl-[acyl-carrier-protein] dehydratase FabZ (157 aa).

Residue His58 is part of the active site.

It belongs to the thioester dehydratase family. FabZ subfamily.

It localises to the cytoplasm. The enzyme catalyses a (3R)-hydroxyacyl-[ACP] = a (2E)-enoyl-[ACP] + H2O. Involved in unsaturated fatty acids biosynthesis. Catalyzes the dehydration of short chain beta-hydroxyacyl-ACPs and long chain saturated and unsaturated beta-hydroxyacyl-ACPs. The sequence is that of 3-hydroxyacyl-[acyl-carrier-protein] dehydratase FabZ from Rhizobium rhizogenes (strain K84 / ATCC BAA-868) (Agrobacterium radiobacter).